Consider the following 165-residue polypeptide: Chorismate pyruvate-lyase (165 aa).

Residues Met35, Arg77, Leu115, and Glu156 each coordinate substrate.

It belongs to the UbiC family. In terms of assembly, monomer.

The protein localises to the cytoplasm. The enzyme catalyses chorismate = 4-hydroxybenzoate + pyruvate. The protein operates within cofactor biosynthesis; ubiquinone biosynthesis. In terms of biological role, removes the pyruvyl group from chorismate, with concomitant aromatization of the ring, to provide 4-hydroxybenzoate (4HB) for the ubiquinone pathway. The protein is Chorismate pyruvate-lyase of Enterobacter sp. (strain 638).